The following is a 276-amino-acid chain: Protein canopy homolog 3 (276 aa).

The first 26 residues, 1–26 (MESMSELAPRCLLFPLLLLLPLLLLP), serve as a signal peptide directing secretion. The Saposin B-type domain maps to 47 to 269 (SKCEVCKYVA…EGVQKASPLP (223 aa)). Disulfide bonds link C49–C206, C52–C194, and C104–C166. N153 carries an N-linked (GlcNAc...) asparagine glycan. Residues 153–179 (NETSAEVADLKKQCDVLVEEFEEVIED) are a coiled coil. The interval 218-276 (IASLGGKKSKKKRSGVKGSSSGSSKQRKELGGLGEDANAEEEEGVQKASPLPHSPPDEL) is disordered.

This sequence belongs to the canopy family. In terms of assembly, interacts with HSP90B1; this interaction is disrupted in the presence of ATP. Interacts with TLR1, TLR2, TLR4 and TLR9. Strongest interaction with TLR4.

It localises to the endoplasmic reticulum. Its function is as follows. Toll-like receptor (TLR)-specific co-chaperone for HSP90B1. Required for proper TLR folding, except that of TLR3, and hence controls TLR exit from the endoplasmic reticulum. Consequently, required for both innate and adaptive immune responses. The sequence is that of Protein canopy homolog 3 (Cnpy3) from Mus musculus (Mouse).